The chain runs to 527 residues: Plant-specific TFIIB-related protein PTF2 (527 aa).

A TFIIB-type zinc finger spans residues 1-30; the sequence is MRCKRCNGSNFERDEDTGNSYCGGCGTLRE.

As to quaternary structure, can form homodimer. Interacts with TBP2. In terms of tissue distribution, expressed in shoot apical meristems, root tips, primordia of lateral roots, inflorescences, developing pollen grains and embryos.

The protein resides in the nucleus. Plant-specific TFIIB-related protein that plays important roles in pollen germination and embryogenesis, possibly by regulating gene expression through interaction with TBP2 and the subunits of RNA polymerases. Binds double-stranded DNA in vitro. This is Plant-specific TFIIB-related protein PTF2 from Arabidopsis thaliana (Mouse-ear cress).